The chain runs to 870 residues: Translation initiation factor IF-2 (870 aa).

Residues 49–284 (SFQNSAPAEK…TKRKERPLPE (236 aa)) form a disordered region. Composition is skewed to basic and acidic residues over residues 70–81 (RKNEKKQEDNAG) and 94–109 (QNND…RDHS). Over residues 116–127 (KPKAAALLQQFK) the composition is skewed to low complexity. 2 stretches are compositionally biased toward basic and acidic residues: residues 144–159 (AKKE…KKEQ) and 168–183 (NKES…EKKV). Positions 254–279 (RKRRKNKNKKRKQEQKPKKQITKRKE) are enriched in basic residues. Residues 371-540 (KRPPVVTIMG…LLQADMMELK (170 aa)) enclose the tr-type G domain. The tract at residues 380-387 (GHVDHGKT) is G1. 380–387 (GHVDHGKT) contacts GTP. The G2 stretch occupies residues 405–409 (GITQK). Positions 426–429 (DTPG) are G3. GTP is bound by residues 426-430 (DTPGH) and 480-483 (NKMD). The tract at residues 480-483 (NKMD) is G4. The G5 stretch occupies residues 516-518 (SAR).

The protein belongs to the TRAFAC class translation factor GTPase superfamily. Classic translation factor GTPase family. IF-2 subfamily.

The protein resides in the cytoplasm. Functionally, one of the essential components for the initiation of protein synthesis. Protects formylmethionyl-tRNA from spontaneous hydrolysis and promotes its binding to the 30S ribosomal subunits. Also involved in the hydrolysis of GTP during the formation of the 70S ribosomal complex. The polypeptide is Translation initiation factor IF-2 (Lactobacillus helveticus (strain DPC 4571)).